The sequence spans 127 residues: Venom protein family 16 protein 1 (127 aa).

An N-terminal signal peptide occupies residues 1 to 18 (MWIWYSLLFFGVCHLAHS).

As to expression, expressed by the venom gland (anterior main gland) (at protein level).

The protein resides in the secreted. The protein is Venom protein family 16 protein 1 of Platymeris rhadamanthus (Red spot assassin bug).